A 321-amino-acid chain; its full sequence is tRNA(Ile)-lysidine synthase (321 aa).

30–35 (SGGSDS) contacts ATP.

It belongs to the tRNA(Ile)-lysidine synthase family.

It localises to the cytoplasm. It carries out the reaction cytidine(34) in tRNA(Ile2) + L-lysine + ATP = lysidine(34) in tRNA(Ile2) + AMP + diphosphate + H(+). Functionally, ligates lysine onto the cytidine present at position 34 of the AUA codon-specific tRNA(Ile) that contains the anticodon CAU, in an ATP-dependent manner. Cytidine is converted to lysidine, thus changing the amino acid specificity of the tRNA from methionine to isoleucine. This is tRNA(Ile)-lysidine synthase from Chlamydia muridarum (strain MoPn / Nigg).